Here is a 390-residue protein sequence, read N- to C-terminus: Heparan sulfate glucosamine 3-O-sulfotransferase 3B1 (390 aa).

Residues 1–25 form a disordered region; that stretch reads MGQRLSGGRSCLDVPGRLLPQPPPP. At 1-32 the chain is on the cytoplasmic side; it reads MGQRLSGGRSCLDVPGRLLPQPPPPPPPVRRK. The chain crosses the membrane as a helical; Signal-anchor for type II membrane protein span at residues 33–53; the sequence is LALLFAMLCVWLYMFLYSCAG. Residues 54–390 lie on the Lumenal side of the membrane; it reads SCAAAPGLLL…QMTGHDFGWD (337 aa). The tract at residues 74–133 is disordered; it reads PPALATAPDGTPPRLPFRAPPATPLASGKEMAEGAASPEEQSPEVPDSPSPISSFFSGSG. A compositionally biased stretch (pro residues) spans 83–96; sequence GTPPRLPFRAPPAT. Residues 123–133 show a composition bias toward low complexity; sequence SPISSFFSGSG. 147-151 provides a ligand contact to 3'-phosphoadenylyl sulfate; that stretch reads KGGTR. Substrate-binding positions include 169–175 and 200–203; these read EPHFFDR and KTPS. 3'-phosphoadenylyl sulfate is bound by residues arginine 228 and serine 236. A glycan (N-linked (GlcNAc...) asparagine) is linked at asparagine 258. Residue 268 to 269 coordinates substrate; it reads WS. An N-linked (GlcNAc...) asparagine glycan is attached at asparagine 329. Cysteine 336 and cysteine 348 are joined by a disulfide. A 3'-phosphoadenylyl sulfate-binding site is contributed by 353-357; it reads KGRTH.

The protein belongs to the sulfotransferase 1 family. In terms of tissue distribution, ubiquitous. Most abundant in liver and placenta, followed by heart and kidney.

It localises to the golgi apparatus membrane. It carries out the reaction alpha-D-glucosaminyl-[heparan sulfate](n) + 3'-phosphoadenylyl sulfate = 3-sulfo-alpha-D-glucosaminyl-[heparan sulfate](n) + adenosine 3',5'-bisphosphate + H(+). Its function is as follows. Sulfotransferase that utilizes 3'-phospho-5'-adenylyl sulfate (PAPS) to catalyze the transfer of a sulfo group to an N-unsubstituted glucosamine linked to a 2-O-sulfo iduronic acid unit on heparan sulfate. Catalyzes the O-sulfation of glucosamine in IdoUA2S-GlcNS and also in IdoUA2S-GlcNH2. The substrate-specific O-sulfation generates an enzyme-modified heparan sulfate which acts as a binding receptor to Herpes simplex virus-1 (HSV-1) and permits its entry. Unlike HS3ST1/3-OST-1, does not convert non-anticoagulant heparan sulfate to anticoagulant heparan sulfate. The polypeptide is Heparan sulfate glucosamine 3-O-sulfotransferase 3B1 (HS3ST3B1) (Homo sapiens (Human)).